A 131-amino-acid polypeptide reads, in one-letter code: Small ribosomal subunit protein uS11 (131 aa).

The protein belongs to the universal ribosomal protein uS11 family. Part of the 30S ribosomal subunit. Interacts with proteins S7 and S18. Binds to IF-3.

Functionally, located on the platform of the 30S subunit, it bridges several disparate RNA helices of the 16S rRNA. Forms part of the Shine-Dalgarno cleft in the 70S ribosome. This is Small ribosomal subunit protein uS11 from Exiguobacterium sibiricum (strain DSM 17290 / CCUG 55495 / CIP 109462 / JCM 13490 / 255-15).